The primary structure comprises 452 residues: Neuromedin-K receptor (452 aa).

Topologically, residues 1–71 are extracellular; the sequence is MASVPTGENW…TNQFVQPSWR (71 aa). N-linked (GlcNAc...) asparagine glycosylation is found at Asn-9, Asn-23, Asn-40, and Asn-60. Residues 72-94 form a helical membrane-spanning segment; that stretch reads IALWSLAYGLVVAVAVFGNLIVI. Over 95–104 the chain is Cytoplasmic; that stretch reads WIILAHKRMR. A helical transmembrane segment spans residues 105–126; the sequence is TVTNYFLVNLAFSDASVAAFNT. The Extracellular portion of the chain corresponds to 127–146; the sequence is LVNFIYGVHSEWYFGANYCR. Residues Cys-145 and Cys-220 are joined by a disulfide bond. Residues 147–168 form a helical membrane-spanning segment; it reads FQNFFPITAVFASIYSMTAIAV. Residues 169 to 188 are Cytoplasmic-facing; sequence DRYMAIIDPLKPRLSATATK. Residues 189 to 209 form a helical membrane-spanning segment; that stretch reads IVIGSIWILAFLLAFPQCLYS. At 210-232 the chain is on the extracellular side; the sequence is KIKVMPGRTLCYVQWPEGPKQHF. The chain crosses the membrane as a helical span at residues 233-257; the sequence is TYHIIVIILVYCFPLLIMGVTYTIV. Residues 258–286 lie on the Cytoplasmic side of the membrane; sequence GITLWGGEIPGDTCDKYHEQLKAKRKVVK. A helical transmembrane segment spans residues 287-308; the sequence is MMIIVVVTFAICWLPYHVYFIL. Residues 309–321 lie on the Extracellular side of the membrane; that stretch reads TAIYQQLNRWKYI. A helical transmembrane segment spans residues 322-346; it reads QQVYLASFWLAMSSTMYNPIIYCCL. Topologically, residues 347-452 are cytoplasmic; it reads NKRFRAGFKR…SPYTSVDEYS (106 aa). The S-palmitoyl cysteine moiety is linked to residue Cys-361. A disordered region spans residues 401-452; that stretch reads DPSEGDPAKSSRKKRAVPRDPSANGCSHREFKSASTTSSFISSPYTSVDEYS. Over residues 433–452 the composition is skewed to low complexity; the sequence is SASTTSSFISSPYTSVDEYS.

This sequence belongs to the G-protein coupled receptor 1 family. In terms of processing, the anchoring of this receptor to the plasma membrane is probably mediated by the palmitoylation of a cysteine residue.

Its subcellular location is the cell membrane. Its function is as follows. This is a receptor for the tachykinin neuropeptide neuromedin-K (neurokinin B). It is associated with G proteins that activate a phosphatidylinositol-calcium second messenger system. This is Neuromedin-K receptor (Tacr3) from Mus musculus (Mouse).